The primary structure comprises 363 residues: Carbamoyl phosphate synthase small chain (363 aa).

Residues 1–172 (MTKRILMLED…AFASPGDGKR (172 aa)) form a CPSase region. The L-glutamine site is built by Ser46, Gly220, and Gly222. One can recognise a Glutamine amidotransferase type-1 domain in the interval 172-359 (RVVLVDYGVK…MEMMNGKEEG (188 aa)). Residue Cys247 is the Nucleophile of the active site. Leu248, Gln251, Asn289, Gly291, and Tyr292 together coordinate L-glutamine. Active-site residues include His332 and Glu334.

The protein belongs to the CarA family. In terms of assembly, composed of two chains; the small (or glutamine) chain promotes the hydrolysis of glutamine to ammonia, which is used by the large (or ammonia) chain to synthesize carbamoyl phosphate. Tetramer of heterodimers (alpha,beta)4.

It carries out the reaction hydrogencarbonate + L-glutamine + 2 ATP + H2O = carbamoyl phosphate + L-glutamate + 2 ADP + phosphate + 2 H(+). The catalysed reaction is L-glutamine + H2O = L-glutamate + NH4(+). It participates in amino-acid biosynthesis; L-arginine biosynthesis; carbamoyl phosphate from bicarbonate: step 1/1. The protein operates within pyrimidine metabolism; UMP biosynthesis via de novo pathway; (S)-dihydroorotate from bicarbonate: step 1/3. Its function is as follows. Small subunit of the glutamine-dependent carbamoyl phosphate synthetase (CPSase). CPSase catalyzes the formation of carbamoyl phosphate from the ammonia moiety of glutamine, carbonate, and phosphate donated by ATP, constituting the first step of 2 biosynthetic pathways, one leading to arginine and/or urea and the other to pyrimidine nucleotides. The small subunit (glutamine amidotransferase) binds and cleaves glutamine to supply the large subunit with the substrate ammonia. The chain is Carbamoyl phosphate synthase small chain from Listeria monocytogenes serovar 1/2a (strain ATCC BAA-679 / EGD-e).